The sequence spans 498 residues: Glycerol kinase (498 aa).

T12 contacts ADP. Positions 12, 13, and 14 each coordinate ATP. T12 is a binding site for sn-glycerol 3-phosphate. ADP is bound at residue R16. Sn-glycerol 3-phosphate contacts are provided by R82, E83, Y134, and D243. Glycerol is bound by residues R82, E83, Y134, D243, and Q244. 2 residues coordinate ADP: T265 and G308. Residues T265, G308, Q312, and G409 each contribute to the ATP site. 2 residues coordinate ADP: G409 and N413.

Belongs to the FGGY kinase family. Homotetramer and homodimer (in equilibrium).

The catalysed reaction is glycerol + ATP = sn-glycerol 3-phosphate + ADP + H(+). Its pathway is polyol metabolism; glycerol degradation via glycerol kinase pathway; sn-glycerol 3-phosphate from glycerol: step 1/1. With respect to regulation, activated by phosphorylation and inhibited by fructose 1,6-bisphosphate (FBP). Functionally, key enzyme in the regulation of glycerol uptake and metabolism. Catalyzes the phosphorylation of glycerol to yield sn-glycerol 3-phosphate. This is Glycerol kinase from Agathobacter rectalis (strain ATCC 33656 / DSM 3377 / JCM 17463 / KCTC 5835 / VPI 0990) (Eubacterium rectale).